A 355-amino-acid chain; its full sequence is S-adenosylmethionine:tRNA ribosyltransferase-isomerase (355 aa).

Belongs to the QueA family. Monomer.

It is found in the cytoplasm. It carries out the reaction 7-aminomethyl-7-carbaguanosine(34) in tRNA + S-adenosyl-L-methionine = epoxyqueuosine(34) in tRNA + adenine + L-methionine + 2 H(+). It functions in the pathway tRNA modification; tRNA-queuosine biosynthesis. Functionally, transfers and isomerizes the ribose moiety from AdoMet to the 7-aminomethyl group of 7-deazaguanine (preQ1-tRNA) to give epoxyqueuosine (oQ-tRNA). The polypeptide is S-adenosylmethionine:tRNA ribosyltransferase-isomerase (Jannaschia sp. (strain CCS1)).